A 437-amino-acid chain; its full sequence is MSAEAEEDCHSDADRVGDEGNESPAERDLQAQLQMFRAQWMFELTPGVGSSHGETRPCRAGRSSMLKAAADTKGRQELAKEEKARELFLQAVEEEQNGALYEAIKFYRRAMQLVPDIEFKITYTRSPDGDGVGSGYIEENEDASKMADLLSYFQQQLTLQESVLKLCQPELETSQTHISVLPMEVLMYIFRWVVSSDLDLRSLEQLSLVCRGFYICARDPEIWRLACLKVWGRSCMKLVPYASWREMFLERPRVRFDGVYISKTTYIRQGEQSLDGFYRAWHQVEYYRYMRFFPDGHVMMLTTPEEPPSIVPRLRTRNTRTDAILLGHYRLSQDADNQTKVFAVITKKKEEKPLDHKYRYFRRVPVQEADHSFHVGLQLCSSGHQRFNKLIWIHHSCHITYKATGETAVSAFEIDKMYTPLLFARVRSYTAFSERPL.

Positions 1–26 are disordered; it reads MSAEAEEDCHSDADRVGDEGNESPAE. Ser-2 bears the N-acetylalanine mark. Basic and acidic residues predominate over residues 8–26; sequence DCHSDADRVGDEGNESPAE. His-10 carries the post-translational modification Phosphoserine. The TPR repeat unit spans residues 84–117; that stretch reads ARELFLQAVEEEQNGALYEAIKFYRRAMQLVPDI. Ser-126 carries the post-translational modification Phosphoserine. Residues 175 to 226 form the F-box domain; that stretch reads QTHISVLPMEVLMYIFRWVVSSDLDLRSLEQLSLVCRGFYICARDPEIWRLA.

Part of the SCF (SKP1-CUL1-F-box) E3 ubiquitin-protein ligase complex SCF(FBXO9) composed of CUL1, SKP1, RBX1 and FBXO9. Interacts with TTI1 and TELO2; when TTI1 and TELO2 are phosphorylated by CK2.

It localises to the cytoplasm. It functions in the pathway protein modification; protein ubiquitination. Functionally, substrate recognition component of a SCF (SKP1-CUL1-F-box protein) E3 ubiquitin-protein ligase complex which mediates the ubiquitination and subsequent proteasomal degradation of target proteins and plays a role in several biological processes such as cell cycle, cell proliferation, or maintenance of chromosome stability. Ubiquitinates mTORC1-bound TTI1 and TELO2 when they are phosphorylated by CK2 following growth factor deprivation, leading to their degradation. In contrast, does not mediate ubiquitination of TTI1 and TELO2 when they are part of the mTORC2 complex. As a consequence, mTORC1 is inactivated to restrain cell growth and protein translation, while mTORC2 is the activated due to the relief of feedback inhibition by mTORC1. Plays a role in maintaining epithelial cell survival by regulating the turn-over of chromatin modulator PRMT4 through ubiquitination and degradation by the proteasomal pathway. Also regulates PPARgamma stability by facilitating PPARgamma/PPARG ubiquitination and thereby plays a role in adipocyte differentiation. The sequence is that of F-box only protein 9 (Fbxo9) from Mus musculus (Mouse).